The primary structure comprises 354 residues: Probable L-ascorbate-6-phosphate lactonase UlaG (354 aa).

This sequence belongs to the UlaG family. A divalent metal cation serves as cofactor.

Its subcellular location is the cytoplasm. The catalysed reaction is L-ascorbate 6-phosphate + H2O = 3-dehydro-L-gulonate 6-phosphate. The protein operates within cofactor degradation; L-ascorbate degradation; D-xylulose 5-phosphate from L-ascorbate: step 1/4. Probably catalyzes the hydrolysis of L-ascorbate-6-P into 3-keto-L-gulonate-6-P. Is essential for L-ascorbate utilization under anaerobic conditions. The protein is Probable L-ascorbate-6-phosphate lactonase UlaG of Salmonella heidelberg (strain SL476).